The following is a 196-amino-acid chain: Holliday junction branch migration complex subunit RuvA (196 aa).

A domain I region spans residues 1–63 (MINKICGKIV…EDEIRLFGFL (63 aa)). The domain II stretch occupies residues 64–135 (NVSEREVFEK…KLRGKLVKVN (72 aa)). A flexible linker region spans residues 135-138 (NEAS). The interval 139-196 (SGVLKFKELEQSIVNMGFDRKLVAAAIKEIMLIDEFLMLRQVDQEQFLFREILRKLSG) is domain III.

The protein belongs to the RuvA family. As to quaternary structure, homotetramer. Forms an RuvA(8)-RuvB(12)-Holliday junction (HJ) complex. HJ DNA is sandwiched between 2 RuvA tetramers; dsDNA enters through RuvA and exits via RuvB. An RuvB hexamer assembles on each DNA strand where it exits the tetramer. Each RuvB hexamer is contacted by two RuvA subunits (via domain III) on 2 adjacent RuvB subunits; this complex drives branch migration. In the full resolvosome a probable DNA-RuvA(4)-RuvB(12)-RuvC(2) complex forms which resolves the HJ.

It localises to the cytoplasm. The RuvA-RuvB-RuvC complex processes Holliday junction (HJ) DNA during genetic recombination and DNA repair, while the RuvA-RuvB complex plays an important role in the rescue of blocked DNA replication forks via replication fork reversal (RFR). RuvA specifically binds to HJ cruciform DNA, conferring on it an open structure. The RuvB hexamer acts as an ATP-dependent pump, pulling dsDNA into and through the RuvAB complex. HJ branch migration allows RuvC to scan DNA until it finds its consensus sequence, where it cleaves and resolves the cruciform DNA. The polypeptide is Holliday junction branch migration complex subunit RuvA (Borrelia turicatae (strain 91E135)).